Here is a 786-residue protein sequence, read N- to C-terminus: Tyrosine-protein kinase Btk (786 aa).

The segment at 1–23 (MMGTKHRNSHVNGSIKSSSSLRS) is disordered. The span at 14–23 (SIKSSSSLRS) shows a compositional bias: low complexity. One can recognise a PH domain in the interval 41-184 (DVVKSGSMVK…WIRAIRQVCE (144 aa)). A Btk-type zinc finger spans residues 187–223 (NTPKSYRYHPGLWSGKKWSCCKGLSRTTFGCRAAAHW). The Zn(2+) site is built by His195, Cys206, Cys207, and Cys217. Low complexity predominate over residues 226 to 240 (ANNNPSNGSSPAQNS). Positions 226 to 301 (ANNNPSNGSS…TPTSLQPQSS (76 aa)) are disordered. Positions 241 to 260 (TRSISPNSSTTNSQFSLQHN) are enriched in polar residues. Residues 264 to 290 (SLGGGVGGGLGGGGSLGLGGGGGGGGS) show a composition bias toward gly residues. Residues 291–301 (CTPTSLQPQSS) show a composition bias toward polar residues. Residues 342-402 (HFVKLVVALY…PSNYVKPKAL (61 aa)) form the SH3 domain. The SH2 domain occupies 410–503 (WYVGDMSRQR…GLACRLKSSP (94 aa)). The region spanning 526–779 (LMLMEELGSG…FRVLMDQLAL (254 aa)) is the Protein kinase domain. ATP contacts are provided by residues 532-540 (LGSGQFGVV) and Lys554. The active-site Proton acceptor is the Asp647. Tyr677 is modified (phosphotyrosine; by autocatalysis).

The protein belongs to the protein kinase superfamily. Tyr protein kinase family. TEC subfamily. Zn(2+) serves as cofactor. In terms of tissue distribution, ring canals in the egg chambers and imaginal disks of third-instar larvae.

The catalysed reaction is L-tyrosyl-[protein] + ATP = O-phospho-L-tyrosyl-[protein] + ADP + H(+). Its function is as follows. Required for proper ring canal development. Also required for the development of male genitalia and for adult survival. The chain is Tyrosine-protein kinase Btk from Drosophila melanogaster (Fruit fly).